A 426-amino-acid chain; its full sequence is UDP-N-acetylglucosamine 1-carboxyvinyltransferase (426 aa).

K22 to N23 provides a ligand contact to phosphoenolpyruvate. R93 contributes to the UDP-N-acetyl-alpha-D-glucosamine binding site. Catalysis depends on D117, which acts as the Proton donor. 2 residues coordinate UDP-N-acetyl-alpha-D-glucosamine: D312 and M334.

The protein belongs to the EPSP synthase family. MurA subfamily.

It localises to the cytoplasm. The enzyme catalyses phosphoenolpyruvate + UDP-N-acetyl-alpha-D-glucosamine = UDP-N-acetyl-3-O-(1-carboxyvinyl)-alpha-D-glucosamine + phosphate. The protein operates within cell wall biogenesis; peptidoglycan biosynthesis. Its function is as follows. Cell wall formation. Adds enolpyruvyl to UDP-N-acetylglucosamine. This is UDP-N-acetylglucosamine 1-carboxyvinyltransferase from Treponema denticola (strain ATCC 35405 / DSM 14222 / CIP 103919 / JCM 8153 / KCTC 15104).